A 159-amino-acid chain; its full sequence is Cystatin-9 (159 aa).

The first 28 residues, 1–28 (MSSPQRRKAMPWALSLLLMGFQLLVTYA), serve as a signal peptide directing secretion.

It belongs to the cystatin family. As to expression, expressed in heart, placenta, lung, liver, skeletal muscle and pancreas. Not expressed in brain. Expressed in epididymis, kidney, testis, spinal cord, and thymus with a strong expression in epididymis and kidney and a weak expression in the spinal cord and thymus.

Its subcellular location is the secreted. May be involved in testis development. May play a role in hematopoietic differentiation or inflammation. Has immunomodulatory and antimicrobial functions against Francisella tularensis, a Gram-negative bacteria. This Homo sapiens (Human) protein is Cystatin-9 (CST9).